Here is a 430-residue protein sequence, read N- to C-terminus: Glutamate-1-semialdehyde 2,1-aminomutase (430 aa).

K267 is subject to N6-(pyridoxal phosphate)lysine.

The protein belongs to the class-III pyridoxal-phosphate-dependent aminotransferase family. HemL subfamily. In terms of assembly, homodimer. Pyridoxal 5'-phosphate serves as cofactor.

It localises to the cytoplasm. The enzyme catalyses (S)-4-amino-5-oxopentanoate = 5-aminolevulinate. The protein operates within porphyrin-containing compound metabolism; protoporphyrin-IX biosynthesis; 5-aminolevulinate from L-glutamyl-tRNA(Glu): step 2/2. This Lawsonia intracellularis (strain PHE/MN1-00) protein is Glutamate-1-semialdehyde 2,1-aminomutase.